The chain runs to 503 residues: Rhomboid-type serine protease 2 (503 aa).

Polar residues predominate over residues 1–11 (MAAQSYYNGAY). A disordered region spans residues 1–66 (MAAQSYYNGA…SLRYSQQSIG (66 aa)). The Cytoplasmic portion of the chain corresponds to 1–136 (MAAQSYYNGA…QKKKGFFQKK (136 aa)). Residues 137–157 (IAYVTYILTIAQIIVFIVELV) traverse the membrane as a helical segment. Over 158 to 253 (KMGQLTGSPI…DKPAPDQWFR (96 aa)) the chain is Extracellular. A helical membrane pass occupies residues 254–274 (FIIPMFLHSGFVHIGFNLLVQ). Residues 275 to 283 (MTMGADMER) lie on the Cytoplasmic side of the membrane. A helical transmembrane segment spans residues 284 to 304 (MIGWWRYGLVYLSSGIWGFVL). At 305–316 (GGNYAGQGEASC) the chain is on the extracellular side. Residues 317-337 (GCSGALFGILALFVLDLLYGW) form a helical membrane-spanning segment. Ser-319 acts as the Nucleophile in catalysis. At 338-342 (NDRQN) the chain is on the cytoplasmic side. The helical transmembrane segment at 343–363 (PWVELIIMVLGIAVSFVLGLL) threads the bilayer. The Extracellular segment spans residues 364-365 (PG). A helical membrane pass occupies residues 366-386 (LDNFSHLGGFTMGLALGLCVM). Residue His-371 is part of the active site. The Cytoplasmic segment spans residues 387-449 (RSPNALRERI…FAGRKPLWWA (63 aa)). Residues 450-470 (WWLVRLGALVAVLIGFILLIV) traverse the membrane as a helical segment. Residues 471-503 (NFYKYPSSNCSWCYRFSCLPVNGWCDQGNLFSR) lie on the Extracellular side of the membrane.

The protein belongs to the peptidase S54 family.

It is found in the membrane. It carries out the reaction Cleaves type-1 transmembrane domains using a catalytic dyad composed of serine and histidine that are contributed by different transmembrane domains.. Functionally, probable rhomboid-type serine protease that catalyzes intramembrane proteolysis. This Emericella nidulans (strain FGSC A4 / ATCC 38163 / CBS 112.46 / NRRL 194 / M139) (Aspergillus nidulans) protein is Rhomboid-type serine protease 2.